The primary structure comprises 249 residues: Cell surface glycoprotein CD200 receptor 2 (249 aa).

The N-terminal stretch at 1–24 (MHALGRTPALTLLIFIYNFVSVYT) is a signal peptide. Residues 25–124 (IVSVQMGTKA…GNFHKVYDLQ (100 aa)) form the Ig-like V-type domain. Residues 25–220 (IVSVQMGTKA…TTSTTPSLLT (196 aa)) lie on the Extracellular side of the membrane. Residues C38 and C108 are joined by a disulfide bond. N73, N138, and N171 each carry an N-linked (GlcNAc...) asparagine glycan. Residues 113 to 208 (PEGNFHKVYD…GNQSLSIELS (96 aa)) enclose the Ig-like C2-type domain. C143 and C192 form a disulfide bridge. A helical membrane pass occupies residues 221–241 (ILYVKMVLLGIILLKVGFAFF). The Cytoplasmic segment spans residues 242-249 (QKRNVTRT).

The protein belongs to the CD200R family. As to expression, expressed in bone marrow, spleen, brain, lung, testis and thymus.

Its subcellular location is the membrane. Functionally, according to PubMed:15187158 it is a receptor for the CD200 cell surface glycoprotein. According to PubMed:16081818 it is not a receptor for the CD200/OX2 cell surface glycoprotein. Involved in the recruitment or surface expression of the TYROBP receptor. This Mus musculus (Mouse) protein is Cell surface glycoprotein CD200 receptor 2 (Cd200r1l).